A 147-amino-acid chain; its full sequence is 3-hydroxyacyl-[acyl-carrier-protein] dehydratase FabZ (147 aa).

His46 is a catalytic residue.

This sequence belongs to the thioester dehydratase family. FabZ subfamily.

Its subcellular location is the cytoplasm. It catalyses the reaction a (3R)-hydroxyacyl-[ACP] = a (2E)-enoyl-[ACP] + H2O. In terms of biological role, involved in unsaturated fatty acids biosynthesis. Catalyzes the dehydration of short chain beta-hydroxyacyl-ACPs and long chain saturated and unsaturated beta-hydroxyacyl-ACPs. The sequence is that of 3-hydroxyacyl-[acyl-carrier-protein] dehydratase FabZ from Syntrophobacter fumaroxidans (strain DSM 10017 / MPOB).